A 115-amino-acid chain; its full sequence is UPF0235 protein CTA_0423 (115 aa).

The protein belongs to the UPF0235 family.

The chain is UPF0235 protein CTA_0423 from Chlamydia trachomatis serovar A (strain ATCC VR-571B / DSM 19440 / HAR-13).